The chain runs to 296 residues: Lipoyl synthase (296 aa).

C35, C40, C46, C61, C65, C68, and S274 together coordinate [4Fe-4S] cluster. One can recognise a Radical SAM core domain in the interval 47–263 (WSSKHVTVMI…KEAAYARGFL (217 aa)).

Belongs to the radical SAM superfamily. Lipoyl synthase family. The cofactor is [4Fe-4S] cluster.

Its subcellular location is the cytoplasm. It catalyses the reaction [[Fe-S] cluster scaffold protein carrying a second [4Fe-4S](2+) cluster] + N(6)-octanoyl-L-lysyl-[protein] + 2 oxidized [2Fe-2S]-[ferredoxin] + 2 S-adenosyl-L-methionine + 4 H(+) = [[Fe-S] cluster scaffold protein] + N(6)-[(R)-dihydrolipoyl]-L-lysyl-[protein] + 4 Fe(3+) + 2 hydrogen sulfide + 2 5'-deoxyadenosine + 2 L-methionine + 2 reduced [2Fe-2S]-[ferredoxin]. Its pathway is protein modification; protein lipoylation via endogenous pathway; protein N(6)-(lipoyl)lysine from octanoyl-[acyl-carrier-protein]: step 2/2. Functionally, catalyzes the radical-mediated insertion of two sulfur atoms into the C-6 and C-8 positions of the octanoyl moiety bound to the lipoyl domains of lipoate-dependent enzymes, thereby converting the octanoylated domains into lipoylated derivatives. The polypeptide is Lipoyl synthase (Neorickettsia sennetsu (strain ATCC VR-367 / Miyayama) (Ehrlichia sennetsu)).